A 1070-amino-acid chain; its full sequence is MIRDGNEEMSTIPGFSQIQFEGFCRFIDQGLMEELYKFPKIEDTDQEIEFQLFVETYQLAEPLIKERDAVYESLTYSSELYVPAGLIWKTSRNMQEQTIFIGNIPLMNSLGTSIVNGIYRIVINQILQSPGIYYRSELDHNGTSVYTGTIISDWGGRSELEIDRKARIWARVSRKQKISILVLSSAMGSNLREILDNVCYPEIFLSFPNDKEKKKIGSKENAILEFYQQFACVGGDPVFSESLCKELQKKFFQQRCELGRIGRRNMNRRLNLDIPQNNTFLLPRDILAAADRLIGIKFGMGTLDDMNHLKNKRIRSVADLLQDQFGLALVRLENAVRGTICGAIRHKLIPTPQNLVTSTPLTTTYESFFGLHPLSQVLDRTNPLTQIVHGRKSSYLGPGGLTGRTASFRIRDIHPSHYGRICPIDTSEGINVGLIGSLAIHARIGHWGSLESPFYEISERSKKVRMLYLSPSKDEYYMVAAGNSLSLNKGIQEEQVVPARYRQEFLTIAWEQVHLRSIFPFQYFSIGASLIPFIEHNDANRALMSSNMQRQAVPLSRSEKCIVGTGLERQAALDSGVSAIAEHEGKIIYTDIDKIILSGNGDTLRIPLVMYQRSNKNTCMHQKPQVQRGKCIKKGQILADGAATVGGELALGKNVLVAYMPWEGYNSEDAVLISECLVYRDIYTSFHIRKYEIQTHVTSQGPERITNEIPHLEAHLLRNLDKNGIVMLGSWVETGDILVGKLTPQTSKESSYAPEDRLLRAILGIQVSTSKETCLKLPIGGRGRVIDVRWIQKKGGSNYNPETIRVYISQKREIKVGDKVAGRHGNKGIISKILPRQDMPYLQNGTPVDMVFNPLGVPSRMNVGQIFECSLGLAGGLLDRHYRIAPFDERYEQEASRKLVFSELYEASKQTANPWVFEPEYPGKSRIFDGRTGDPFEQPVIIGKSYIMKLIHQVDDKIHGRSSGHYALVTQQPLRGRAKQGGQRVGEMEVWALEGFGVAHILQEMLTYKSDHIRARQEVLGTTIIGGTIPNPEDTPESFRLLVRELRSLALELNHFLVSEKNFQINRKAA.

This sequence belongs to the RNA polymerase beta chain family. In plastids the minimal PEP RNA polymerase catalytic core is composed of four subunits: alpha, beta, beta', and beta''. When a (nuclear-encoded) sigma factor is associated with the core the holoenzyme is formed, which can initiate transcription.

The protein resides in the plastid. The protein localises to the chloroplast. The catalysed reaction is RNA(n) + a ribonucleoside 5'-triphosphate = RNA(n+1) + diphosphate. In terms of biological role, DNA-dependent RNA polymerase catalyzes the transcription of DNA into RNA using the four ribonucleoside triphosphates as substrates. The sequence is that of DNA-directed RNA polymerase subunit beta from Buxus microphylla (Littleleaf boxwood).